The primary structure comprises 115 residues: Ribonuclease P protein component (115 aa).

It belongs to the RnpA family. As to quaternary structure, consists of a catalytic RNA component (M1 or rnpB) and a protein subunit.

It catalyses the reaction Endonucleolytic cleavage of RNA, removing 5'-extranucleotides from tRNA precursor.. Its function is as follows. RNaseP catalyzes the removal of the 5'-leader sequence from pre-tRNA to produce the mature 5'-terminus. It can also cleave other RNA substrates such as 4.5S RNA. The protein component plays an auxiliary but essential role in vivo by binding to the 5'-leader sequence and broadening the substrate specificity of the ribozyme. This chain is Ribonuclease P protein component, found in Bacillus cereus (strain ATCC 10987 / NRS 248).